A 957-amino-acid polypeptide reads, in one-letter code: Protein translocase subunit SecA (957 aa).

ATP contacts are provided by residues Gln-86, 104–108 (GEGKT), and Asp-494. The span at 929-947 (SRPAPAPTAAASPDPSSAS) shows a compositional bias: low complexity. Residues 929-957 (SRPAPAPTAAASPDPSSASGVVEADFTEE) are disordered.

This sequence belongs to the SecA family. As to quaternary structure, monomer and homodimer. Part of the essential Sec protein translocation apparatus which comprises SecA, SecYEG and auxiliary proteins SecDF. Other proteins may also be involved.

The protein localises to the cell inner membrane. It is found in the cellular thylakoid membrane. The protein resides in the cytoplasm. It catalyses the reaction ATP + H2O + cellular proteinSide 1 = ADP + phosphate + cellular proteinSide 2.. Part of the Sec protein translocase complex. Interacts with the SecYEG preprotein conducting channel. Has a central role in coupling the hydrolysis of ATP to the transfer of proteins into and across the cell membrane, serving as an ATP-driven molecular motor driving the stepwise translocation of polypeptide chains across the membrane. Its function is as follows. Probably participates in protein translocation into and across both the cytoplasmic and thylakoid membranes in cyanobacterial cells. The polypeptide is Protein translocase subunit SecA (Synechococcus sp. (strain JA-2-3B'a(2-13)) (Cyanobacteria bacterium Yellowstone B-Prime)).